A 66-amino-acid chain; its full sequence is uncharacterized protein (66 aa).

2 helical membrane-spanning segments follow: residues 4-24 and 38-58; these read ALFI…LLIF and LLTP…ILVL.

The protein localises to the membrane. This is an uncharacterized protein from Saccharomyces cerevisiae (strain ATCC 204508 / S288c) (Baker's yeast).